The chain runs to 605 residues: Elongation factor 4 (605 aa).

The region spanning 4 to 186 is the tr-type G domain; the sequence is SATRNFCIIA…AIVARVPAPK (183 aa). GTP is bound by residues 16–21 and 133–136; these read DHGKST and NKID.

This sequence belongs to the TRAFAC class translation factor GTPase superfamily. Classic translation factor GTPase family. LepA subfamily.

Its subcellular location is the cell membrane. It catalyses the reaction GTP + H2O = GDP + phosphate + H(+). In terms of biological role, required for accurate and efficient protein synthesis under certain stress conditions. May act as a fidelity factor of the translation reaction, by catalyzing a one-codon backward translocation of tRNAs on improperly translocated ribosomes. Back-translocation proceeds from a post-translocation (POST) complex to a pre-translocation (PRE) complex, thus giving elongation factor G a second chance to translocate the tRNAs correctly. Binds to ribosomes in a GTP-dependent manner. The polypeptide is Elongation factor 4 (Dehalococcoides mccartyi (strain ATCC BAA-2266 / KCTC 15142 / 195) (Dehalococcoides ethenogenes (strain 195))).